The following is a 124-amino-acid chain: Protein MGF 110-4L (124 aa).

Residues 1–28 (MLVIFLGILGLLANQVLGLPIQAGGHLC) form the signal peptide. An N-linked (GlcNAc...) asparagine; by host glycan is attached at N64. Positions 121–124 (KEDL) match the Prevents secretion from ER motif.

Belongs to the asfivirus MGF 110 family.

The protein localises to the virion. It localises to the host endoplasmic reticulum-Golgi intermediate compartment. Causes the redistribution of lumenal ER protein to an enlarged ERGIC compartment. The polypeptide is Protein MGF 110-4L (Ornithodoros (relapsing fever ticks)).